We begin with the raw amino-acid sequence, 303 residues long: Protoheme IX farnesyltransferase (303 aa).

A run of 7 helical transmembrane segments spans residues 25–45 (MGLV…AIVL), 54–74 (IPQI…ACAL), 118–138 (LLFA…VGYV), 151–171 (WNTV…WTAI), 177–197 (LVAV…FYAL), 230–250 (LVVL…FIVL), and 280–300 (FIYS…ISLI).

The protein belongs to the UbiA prenyltransferase family. Protoheme IX farnesyltransferase subfamily. In terms of assembly, interacts with CtaA.

Its subcellular location is the cell membrane. It catalyses the reaction heme b + (2E,6E)-farnesyl diphosphate + H2O = Fe(II)-heme o + diphosphate. It participates in porphyrin-containing compound metabolism; heme O biosynthesis; heme O from protoheme: step 1/1. Functionally, converts heme B (protoheme IX) to heme O by substitution of the vinyl group on carbon 2 of heme B porphyrin ring with a hydroxyethyl farnesyl side group. The sequence is that of Protoheme IX farnesyltransferase from Staphylococcus saprophyticus subsp. saprophyticus (strain ATCC 15305 / DSM 20229 / NCIMB 8711 / NCTC 7292 / S-41).